Consider the following 90-residue polypeptide: Small ribosomal subunit protein bS20 (90 aa).

It belongs to the bacterial ribosomal protein bS20 family.

In terms of biological role, binds directly to 16S ribosomal RNA. The protein is Small ribosomal subunit protein bS20 of Francisella tularensis subsp. tularensis (strain FSC 198).